The following is a 506-amino-acid chain: Allantoinase (506 aa).

Zn(2+) is bound by residues histidine 105, histidine 107, lysine 195, histidine 231, histidine 292, and aspartate 366. Position 195 is an N6-carboxylysine (lysine 195).

The protein belongs to the metallo-dependent hydrolases superfamily. Allantoinase family. Homotetramer. Zn(2+) serves as cofactor. In terms of processing, carboxylation allows a single lysine to coordinate two zinc ions.

The enzyme catalyses (S)-allantoin + H2O = allantoate + H(+). The protein operates within nitrogen metabolism; (S)-allantoin degradation; allantoate from (S)-allantoin: step 1/1. Its function is as follows. Catalyzes the conversion of allantoin (5-ureidohydantoin) to allantoate by hydrolytic cleavage of the five-member hydantoin ring. Catalyzes the first step of the ureide allantoin degradation followed by the sequential activity of AAH, UGLYAH and UAH which allows a complete purine breakdown without the intermediate generation of urea. The sequence is that of Allantoinase (ALN) from Arabidopsis thaliana (Mouse-ear cress).